Reading from the N-terminus, the 324-residue chain is R2-like ligand binding oxidase (324 aa).

Residues glutamate 79, glutamate 112, and histidine 115 each contribute to the Mn(2+) site. Residues 82 to 173 (VTEDIQPFMK…VNQVRASVTY (92 aa)) constitute a cross-link (3-(O4'-tyrosyl)-valine (Val-Tyr)). Residue glutamate 112 participates in Fe cation binding. Residues glutamate 178, glutamate 213, and histidine 216 each coordinate Fe cation. The tract at residues 304–324 (PEALEEKFGEEDAKAMSEAAG) is disordered. A compositionally biased stretch (basic and acidic residues) spans 307 to 318 (LEEKFGEEDAKA).

Belongs to the ribonucleoside diphosphate reductase small chain family. R2-like ligand binding oxidase subfamily. Homodimer. Requires Fe cation as cofactor. Mn(2+) is required as a cofactor.

In terms of biological role, probable oxidase. The protein is R2-like ligand binding oxidase of Rhodococcus jostii (strain RHA1).